Reading from the N-terminus, the 747-residue chain is E3 UFM1-protein ligase 1 homolog (747 aa).

The disordered stretch occupies residues 403–468 (EKKKQCGSKA…GTVQVNSEEL (66 aa)). Over residues 429-438 (GGKGGKKGGK) the composition is skewed to basic residues. The segment covering 439–449 (GGKNGGGGGKG) has biased composition (gly residues). Polar residues predominate over residues 450-465 (ATSSVPTGSGTVQVNS).

This sequence belongs to the UFL1 family.

Functionally, E3 UFM1-protein ligase that mediates ufmylation of target proteins. The chain is E3 UFM1-protein ligase 1 homolog (ufl-1) from Caenorhabditis briggsae.